The primary structure comprises 290 residues: Undecaprenyl-diphosphatase (290 aa).

8 helical membrane-spanning segments follow: residues 1-21 (MFLLELIKGIILGIVEGLTEF), 48-68 (SAFTFKVVIQLGSVFAAAWVF), 101-121 (IHVLVGMVPAGILGFLFDDLI), 125-145 (LFSVPTVLIGLFIGAIYMIIA), 161-181 (INYFQAFVIGISQAIAMWPGF), 202-222 (SDFTFIMSVPIMLAASGLSLL), 231-251 (AHIPFYILGFLAAFIVGLIAI), and 266-286 (FAIYRIVLVIFIAILYFGFGI).

The protein belongs to the UppP family.

It localises to the cell membrane. The catalysed reaction is di-trans,octa-cis-undecaprenyl diphosphate + H2O = di-trans,octa-cis-undecaprenyl phosphate + phosphate + H(+). Catalyzes the dephosphorylation of undecaprenyl diphosphate (UPP). Confers resistance to bacitracin. This Staphylococcus epidermidis (strain ATCC 35984 / DSM 28319 / BCRC 17069 / CCUG 31568 / BM 3577 / RP62A) protein is Undecaprenyl-diphosphatase.